The following is an 861-amino-acid chain: ToMV susceptible protein tm-2 (861 aa).

The stretch at 63-83 (VKNLLKDIQELAGDVEDLLDD) forms a coiled coil. One can recognise an NB-ARC domain in the interval 162 to 388 (DDFNMLQAKL…LESMGHKVQD (227 aa)). Residue 185–192 (GMPGLGKT) coordinates ATP. LRR repeat units lie at residues 225–248 (LDIA…NLRS), 305–327 (LHAL…IFNF), 388–411 (DGCA…CFLY), 449–472 (LAED…TYNG), 510–536 (VARL…KLEK), 585–608 (MTCL…IVKL), 609–631 (TRLE…VWES), 652–680 (ISSF…FFEP), 689–713 (LRKL…PVPK), 735–758 (YPKI…AFPP), 781–804 (LPKL…LSGE), and 810–835 (FPQL…DVSM).

This sequence belongs to the disease resistance NB-LRR family. (Microbial infection) Fails to interact with the tobamovirus mouvement protein of tobacco mosaic virus (TMV).

Its subcellular location is the cell membrane. In terms of biological role, potential inhibitor of viral mouvements which may confer resistance to some tobamoviruses but not to the tomato mosaic virus (ToMV) and tobacco mosaic virus (TMV). The protein is ToMV susceptible protein tm-2 of Solanum lycopersicum (Tomato).